We begin with the raw amino-acid sequence, 606 residues long: Aspartate--tRNA(Asp/Asn) ligase (606 aa).

Glu-187 contributes to the L-aspartate binding site. The segment at 211–214 (QQFK) is aspartate. The L-aspartate site is built by Arg-233 and His-461. 233-235 (RDE) serves as a coordination point for ATP. Glu-495 contacts ATP. An L-aspartate-binding site is contributed by Arg-502. 547–550 (GLDR) is a binding site for ATP.

The protein belongs to the class-II aminoacyl-tRNA synthetase family. Type 1 subfamily. Homodimer.

It localises to the cytoplasm. It catalyses the reaction tRNA(Asx) + L-aspartate + ATP = L-aspartyl-tRNA(Asx) + AMP + diphosphate. In terms of biological role, aspartyl-tRNA synthetase with relaxed tRNA specificity since it is able to aspartylate not only its cognate tRNA(Asp) but also tRNA(Asn). Reaction proceeds in two steps: L-aspartate is first activated by ATP to form Asp-AMP and then transferred to the acceptor end of tRNA(Asp/Asn). In Chlorobium phaeobacteroides (strain DSM 266 / SMG 266 / 2430), this protein is Aspartate--tRNA(Asp/Asn) ligase.